A 224-amino-acid chain; its full sequence is Glutathione S-transferase U28 (224 aa).

Positions 6–85 (SKVVVLDFWA…YIDETWTDAA (80 aa)) constitute a GST N-terminal domain. Glutathione contacts are provided by residues 16 to 17 (SP), 42 to 43 (NK), 56 to 57 (KV), and 69 to 70 (ES). The 127-residue stretch at 91 to 217 (DPQSRATARF…EKVYQQVLKL (127 aa)) folds into the GST C-terminal domain. Threonine 154 is modified (phosphothreonine).

The protein belongs to the GST superfamily. Tau family.

The protein localises to the cytoplasm. It localises to the cytosol. The enzyme catalyses RX + glutathione = an S-substituted glutathione + a halide anion + H(+). Its function is as follows. May be involved in the conjugation of reduced glutathione to a wide number of exogenous and endogenous hydrophobic electrophiles and have a detoxification role against certain herbicides. The chain is Glutathione S-transferase U28 (GSTU28) from Arabidopsis thaliana (Mouse-ear cress).